Here is a 192-residue protein sequence, read N- to C-terminus: Crossover junction endodeoxyribonuclease RuvC (192 aa).

Active-site residues include Asp20, Glu80, and Asp153. Mg(2+)-binding residues include Asp20, Glu80, and Asp153.

This sequence belongs to the RuvC family. As to quaternary structure, homodimer which binds Holliday junction (HJ) DNA. The HJ becomes 2-fold symmetrical on binding to RuvC with unstacked arms; it has a different conformation from HJ DNA in complex with RuvA. In the full resolvosome a probable DNA-RuvA(4)-RuvB(12)-RuvC(2) complex forms which resolves the HJ. Mg(2+) serves as cofactor.

Its subcellular location is the cytoplasm. The enzyme catalyses Endonucleolytic cleavage at a junction such as a reciprocal single-stranded crossover between two homologous DNA duplexes (Holliday junction).. Functionally, the RuvA-RuvB-RuvC complex processes Holliday junction (HJ) DNA during genetic recombination and DNA repair. Endonuclease that resolves HJ intermediates. Cleaves cruciform DNA by making single-stranded nicks across the HJ at symmetrical positions within the homologous arms, yielding a 5'-phosphate and a 3'-hydroxyl group; requires a central core of homology in the junction. The consensus cleavage sequence is 5'-(A/T)TT(C/G)-3'. Cleavage occurs on the 3'-side of the TT dinucleotide at the point of strand exchange. HJ branch migration catalyzed by RuvA-RuvB allows RuvC to scan DNA until it finds its consensus sequence, where it cleaves and resolves the cruciform DNA. The sequence is that of Crossover junction endodeoxyribonuclease RuvC from Christiangramia forsetii (strain DSM 17595 / CGMCC 1.15422 / KT0803) (Gramella forsetii).